Consider the following 628-residue polypeptide: Beta-galactosidase large subunit (628 aa).

The active-site Proton donor is Glu-468. Glu-536 functions as the Nucleophile in the catalytic mechanism.

The protein belongs to the glycosyl hydrolase 2 family. Heterodimer of a large (LacL) and a small subunit (LacM).

The enzyme catalyses Hydrolysis of terminal non-reducing beta-D-galactose residues in beta-D-galactosides.. Component of a beta-galactosidase. The sequence is that of Beta-galactosidase large subunit (lacL) from Lactobacillus acidophilus (strain ATCC 700396 / NCK56 / N2 / NCFM).